We begin with the raw amino-acid sequence, 137 residues long: Large ribosomal subunit protein uL14 (137 aa).

This sequence belongs to the universal ribosomal protein uL14 family. In terms of assembly, component of the large ribosomal subunit. Mature ribosomes consist of a small (40S) and a large (60S) subunit. The 40S subunit contains about 32 different proteins and 1 molecule of RNA (18S). The 60S subunit contains 45 different proteins and 3 molecules of RNA (25S, 5.8S and 5S).

It is found in the cytoplasm. In terms of biological role, component of the ribosome, a large ribonucleoprotein complex responsible for the synthesis of proteins in the cell. The small ribosomal subunit (SSU) binds messenger RNAs (mRNAs) and translates the encoded message by selecting cognate aminoacyl-transfer RNA (tRNA) molecules. The large subunit (LSU) contains the ribosomal catalytic site termed the peptidyl transferase center (PTC), which catalyzes the formation of peptide bonds, thereby polymerizing the amino acids delivered by tRNAs into a polypeptide chain. The nascent polypeptides leave the ribosome through a tunnel in the LSU and interact with protein factors that function in enzymatic processing, targeting, and the membrane insertion of nascent chains at the exit of the ribosomal tunnel. The chain is Large ribosomal subunit protein uL14 from Candida albicans (strain SC5314 / ATCC MYA-2876) (Yeast).